The chain runs to 248 residues: Opiorphin prepropeptide (248 aa).

Residues 1–21 (MKLTFFLGLLALISCFTPSES) form the signal peptide. Pyrrolidone carboxylic acid is present on Gln22. A disordered region spans residues 150-198 (DTTITTNPPTTATATTSTSTKPTMTISSSTVPISSTPEPATSISAATPA). Asn218 carries N-linked (GlcNAc...) asparagine glycosylation.

The protein belongs to the PROL1/PROL3 family. As to expression, abundantly expressed in lacrimal gland where it found in the secretory endpieces. Also expressed at modest levels in the submandibular gland.

The protein resides in the secreted. Its function is as follows. Opiorphin is an endogenous inhibitor of neprilysin and aminopeptidase N. Inhibits the breakdown of substance P, Mca-BK2 and Met-enkephalin by neprilysin in vitro with IC(50) values of 29 uM, 33 uM and 33 uM respectively. Inhibits the breakdown of Ala-pNA by aminopeptidase N in vitro with an IC(50) of 65 uM. Has a potent analgesic effect when administered to rats by intravenous injection. This Homo sapiens (Human) protein is Opiorphin prepropeptide.